The primary structure comprises 53 residues: KKGVTLREDDRTFPCSSGLCACLPLDSYSYICLSPSSSTANCENDECISEDDW.

Residues 1-6 (KKGVTL) constitute a propeptide that is removed on maturation. Disulfide bonds link Cys-15-Cys-32, Cys-20-Cys-42, and Cys-22-Cys-47.

Expressed by the venom duct.

The protein resides in the secreted. In terms of biological role, probable neurotoxin with unknown target. Possibly targets ion channels. The protein is Conotoxin Cal9.2f of Californiconus californicus (California cone).